The following is a 122-amino-acid chain: uncharacterized protein (122 aa).

This is an uncharacterized protein from Acidianus sp. F28 (AFV-2).